Reading from the N-terminus, the 413-residue chain is 4-hydroxy-3-methylbut-2-en-1-yl diphosphate synthase (flavodoxin) (413 aa).

Residues Cys-305, Cys-308, Cys-351, and Glu-358 each contribute to the [4Fe-4S] cluster site.

This sequence belongs to the IspG family. [4Fe-4S] cluster serves as cofactor.

The enzyme catalyses (2E)-4-hydroxy-3-methylbut-2-enyl diphosphate + oxidized [flavodoxin] + H2O + 2 H(+) = 2-C-methyl-D-erythritol 2,4-cyclic diphosphate + reduced [flavodoxin]. It participates in isoprenoid biosynthesis; isopentenyl diphosphate biosynthesis via DXP pathway; isopentenyl diphosphate from 1-deoxy-D-xylulose 5-phosphate: step 5/6. Functionally, converts 2C-methyl-D-erythritol 2,4-cyclodiphosphate (ME-2,4cPP) into 1-hydroxy-2-methyl-2-(E)-butenyl 4-diphosphate. The sequence is that of 4-hydroxy-3-methylbut-2-en-1-yl diphosphate synthase (flavodoxin) from Bartonella tribocorum (strain CIP 105476 / IBS 506).